Reading from the N-terminus, the 693-residue chain is Lamina-associated polypeptide 2, isoforms alpha/zeta (693 aa).

An LEM-like domain is found at Leu-5 to Arg-48. Disordered regions lie at residues Arg-48–Glu-113, Leu-148–Thr-211, and Thr-227–Pro-270. Residues Asn-49–Asp-107 are linker. Phosphoserine occurs at positions 59, 66, and 67. Phosphothreonine is present on Thr-74. 2 positions are modified to phosphoserine: Ser-79 and Ser-82. An omega-N-methylarginine mark is found at Arg-85 and Arg-87. Over residues Lys-96–Asp-105 the composition is skewed to basic and acidic residues. The region spanning Asp-108–Gly-152 is the LEM domain. Thr-153 carries the phosphothreonine modification. Polar residues predominate over residues Glu-154–Asn-177. Phosphoserine is present on residues Ser-155 and Ser-158. 2 positions are modified to phosphothreonine: Thr-159 and Thr-163. Phosphoserine occurs at positions 165 and 167. A compositionally biased stretch (basic and acidic residues) spans Asp-178–Lys-190. A Nuclear localization signal motif is present at residues Lys-190 to Val-196. N6-acetyllysine is present on Ser-206. A compositionally biased stretch (basic and acidic residues) spans Thr-245–Cys-254. The residue at position 310 (Ser-310) is a Phosphoserine. Arg-329 is modified (omega-N-methylarginine). The disordered stretch occupies residues Lys-332 to Phe-351. Phosphoserine is present on residues Ser-349, Ser-352, Ser-368, Ser-420, and Ser-422. Positions Gln-412–Ser-422 are enriched in low complexity. The interval Gln-412–Ser-442 is disordered. Residues Thr-557–Asp-656 are a coiled coil. Lys-655 carries the N6-acetyllysine modification.

This sequence belongs to the LEM family. Homooligomer. Interacts with LMNA, BANF1 and RB1 and with chromosomes. Associates directly or indirectly with lamins at specific cell-cycle stages. Interacts with CMTM6. Phosphorylated in a mitose-specific manner.

It is found in the nucleus. The protein localises to the chromosome. Functionally, may be involved in the structural organization of the nucleus and in the post-mitotic nuclear assembly. Plays an important role, together with LMNA, in the nuclear anchorage of RB1. The sequence is that of Lamina-associated polypeptide 2, isoforms alpha/zeta (Tmpo) from Mus musculus (Mouse).